We begin with the raw amino-acid sequence, 431 residues long: Histidinol dehydrogenase (431 aa).

Tyr-127, Gln-185, and Asn-208 together coordinate NAD(+). Residues Ser-234, Gln-256, and His-259 each contribute to the substrate site. Residues Gln-256 and His-259 each coordinate Zn(2+). Active-site proton acceptor residues include Glu-323 and His-324. Substrate contacts are provided by His-324, Asp-357, Glu-411, and His-416. Residue Asp-357 coordinates Zn(2+). His-416 serves as a coordination point for Zn(2+).

Belongs to the histidinol dehydrogenase family. The cofactor is Zn(2+).

It carries out the reaction L-histidinol + 2 NAD(+) + H2O = L-histidine + 2 NADH + 3 H(+). The protein operates within amino-acid biosynthesis; L-histidine biosynthesis; L-histidine from 5-phospho-alpha-D-ribose 1-diphosphate: step 9/9. Functionally, catalyzes the sequential NAD-dependent oxidations of L-histidinol to L-histidinaldehyde and then to L-histidine. The sequence is that of Histidinol dehydrogenase from Vibrio vulnificus (strain CMCP6).